Reading from the N-terminus, the 260-residue chain is Hemin import ATP-binding protein HmuV (260 aa).

Residues 7-243 (IQASNISVTF…ERIEQVYGYS (237 aa)) enclose the ABC transporter domain. 39-46 (GPNGAGKS) serves as a coordination point for ATP.

The protein belongs to the ABC transporter superfamily. Heme (hemin) importer (TC 3.A.1.14.5) family. In terms of assembly, the complex is composed of two ATP-binding proteins (HmuV), two transmembrane proteins (HmuU) and a solute-binding protein (HmuT).

The protein localises to the cell inner membrane. In terms of biological role, part of the ABC transporter complex HmuTUV involved in hemin import. Responsible for energy coupling to the transport system. This is Hemin import ATP-binding protein HmuV from Vibrio anguillarum (strain ATCC 68554 / 775) (Listonella anguillarum).